Here is a 791-residue protein sequence, read N- to C-terminus: Splicing factor 3A subunit 1 (791 aa).

A disordered region spans residues 1–41 (MQAGPVQAVPPPPPVATESKQPIEEEASSKEDPTPSKPVVG). Residue Lys-20 forms a Glycyl lysine isopeptide (Lys-Gly) (interchain with G-Cter in SUMO2) linkage. The span at 21-34 (QPIEEEASSKEDPT) shows a compositional bias: basic and acidic residues. An SURP motif 1 repeat occupies 52-94 (IVDKTASFVARNGPEFEARIRQNEINNPKFNFLNPNDPYHAYY). Lys-55 carries the N6-acetyllysine modification. Lys-131 participates in a covalent cross-link: Glycyl lysine isopeptide (Lys-Gly) (interchain with G-Cter in SUMO2). The SURP motif 2 repeat unit spans residues 166–208 (VVKLTAQFVARNGRQFLTQLMQKEQRNYQFDFLRPQHSLFNYF). The segment at 318–411 (GESEEVEMEV…APAPDEYLVS (94 aa)) is disordered. 2 positions are modified to phosphoserine: Ser-320 and Ser-329. Residues 320-336 (SEEVEMEVESDEEDQEK) are compositionally biased toward acidic residues. Residues 340–351 (TPSQLDQDTQVQ) show a composition bias toward polar residues. Residues 352-362 (DMDEGSDDEEE) show a composition bias toward acidic residues. At Ser-357 the chain carries Phosphoserine. The span at 366–382 (VPPPPETPMPPPLPPTP) shows a compositional bias: pro residues. Positions 386-395 (IVRKDYDPKA) are enriched in basic and acidic residues. At Ser-411 the chain carries Phosphoserine. Lys-422 is covalently cross-linked (Glycyl lysine isopeptide (Lys-Gly) (interchain with G-Cter in SUMO2)). Ser-449 bears the Phosphoserine mark. Tyr-454 carries the post-translational modification Phosphotyrosine. The span at 486–500 (IGEEEIQKPEEKVTW) shows a compositional bias: basic and acidic residues. Disordered stretches follow at residues 486-516 (IGEEEIQKPEEKVTWDGHSGSMARTQQAAQA), 528-582 (HKAK…AMPP), and 664-684 (PMPPVHPPPPMEDEPPSKKLK). Lys-497 is covalently cross-linked (Glycyl lysine isopeptide (Lys-Gly) (interchain with G-Cter in SUMO2)). Ser-506 bears the Phosphoserine mark. A compositionally biased stretch (polar residues) spans 507–516 (MARTQQAAQA). Lys-540 participates in a covalent cross-link: Glycyl lysine isopeptide (Lys-Gly) (interchain with G-Cter in SUMO2). Residues 561-570 (ATNIPSSAPP) are compositionally biased toward polar residues. Over residues 664–673 (PMPPVHPPPP) the composition is skewed to pro residues. Residues 678 to 700 (PPSKKLKTEDSLMPEEEFLRRNK) are required and sufficient for nuclear import. Lys-684 participates in a covalent cross-link: Glycyl lysine isopeptide (Lys-Gly) (interchain with G-Cter in SUMO2). Positions 705–788 (IKVQVPNMQD…IHLALKERGG (84 aa)) constitute a Ubiquitin-like domain. Tyr-757 is subject to Phosphotyrosine.

Component of the 17S U2 SnRNP complex, a ribonucleoprotein complex that contains small nuclear RNA (snRNA) U2 and a number of specific proteins. Part of the SF3A subcomplex of the 17S U2 SnRNP complex which is composed of three subunits; SF3A3/SAP61, SF3A2/SAP62 and SF3A1/SAP114. SF3A associates with the splicing factor SF3B and a 12S RNA unit to form the mature 17S U2 small nuclear ribonucleoprotein complex (17S U2 snRNP). SF3A1 functions as a scaffold that interacts directly with both SF3A2 and SF3A3. Identified in the spliceosome 'E' complex, a precursor of the spliceosome 'A' complex. Identified in the spliceosome 'A' and 'B' complexes. Identified in the spliceosome 'C' complex. Interacts with P2RX6; resulting in a reduction of the splicing activity.

It is found in the nucleus. It localises to the nucleus speckle. Functionally, component of the 17S U2 SnRNP complex of the spliceosome, a large ribonucleoprotein complex that removes introns from transcribed pre-mRNAs. The 17S U2 SnRNP complex (1) directly participates in early spliceosome assembly and (2) mediates recognition of the intron branch site during pre-mRNA splicing by promoting the selection of the pre-mRNA branch-site adenosine, the nucleophile for the first step of splicing. Within the 17S U2 SnRNP complex, SF3A1 is part of the SF3A subcomplex that contributes to the assembly of the 17S U2 snRNP, and the subsequent assembly of the pre-spliceosome 'E' complex and the pre-catalytic spliceosome 'A' complex. Involved in pre-mRNA splicing as a component of pre-catalytic spliceosome 'B' complexes. In Mus musculus (Mouse), this protein is Splicing factor 3A subunit 1 (Sf3a1).